A 156-amino-acid polypeptide reads, in one-letter code: MSKPKSETAPVAVNRRARFDYEIEETFEAGLMLMGSEVKSLREGRANIAESYVSAEREGLWLINADIPPYGPANRFNHEPKRHRKLLLKAKEIARLTGASTQQGRTIVALRLYFNGRGLAKLQIGLATGKKTVDKRQTIKDREWNKQKSRLMKNYG.

The protein belongs to the SmpB family.

The protein localises to the cytoplasm. Functionally, required for rescue of stalled ribosomes mediated by trans-translation. Binds to transfer-messenger RNA (tmRNA), required for stable association of tmRNA with ribosomes. tmRNA and SmpB together mimic tRNA shape, replacing the anticodon stem-loop with SmpB. tmRNA is encoded by the ssrA gene; the 2 termini fold to resemble tRNA(Ala) and it encodes a 'tag peptide', a short internal open reading frame. During trans-translation Ala-aminoacylated tmRNA acts like a tRNA, entering the A-site of stalled ribosomes, displacing the stalled mRNA. The ribosome then switches to translate the ORF on the tmRNA; the nascent peptide is terminated with the 'tag peptide' encoded by the tmRNA and targeted for degradation. The ribosome is freed to recommence translation, which seems to be the essential function of trans-translation. This Maricaulis maris (strain MCS10) (Caulobacter maris) protein is SsrA-binding protein.